Reading from the N-terminus, the 396-residue chain is 12-oxophytodienoate reductase 3 (396 aa).

FMN contacts are provided by residues 31–33 (PMT), G64, and Q106. 185-188 (HGAH) lines the substrate pocket. Y190 (proton donor) is an active-site residue. R237 serves as a coordination point for FMN. Substrate is bound at residue R283. Residues G321 and 342–343 (GR) contribute to the FMN site. Residues 342–343 (GR) are FMN. The Microbody targeting signal signature appears at 394-396 (SRL).

The protein belongs to the NADH:flavin oxidoreductase/NADH oxidase family. Requires FMN as cofactor. Expressed in roots and to a lower extent in leaves and flowers.

It is found in the peroxisome. The enzyme catalyses (1S,2S)-OPC-8 + NADP(+) = (9S,13S,15Z)-12-oxophyto-10,15-dienoate + NADPH + H(+). Its pathway is lipid metabolism; oxylipin biosynthesis. Specifically cleaves olefinic bonds in cyclic enones. Involved in the biosynthesis of jasmonic acid (JA) and perhaps in biosynthesis or metabolism of other oxylipin signaling moleclules. It is required for the spatial and temporal regulation of JA levels during dehiscence of anthers, promoting the stomium degeneration program. In vitro, reduces 9S,13S-12-oxophytodienoic acid (9S,13S-OPDA) and 9R,13R-OPDA to 9S,13S-OPC-8:0 and 9R,13R-OPC-8:0, respectively. In Solanum lycopersicum (Tomato), this protein is 12-oxophytodienoate reductase 3 (OPR3).